Consider the following 126-residue polypeptide: MAKQKQERRLPAAEAMCKVRTLRTSPRKLNLVAQSIRGLNVQRALNELEFSHKRIAQDVRKALYSAISNAENNHNLDIDSLVVAEAYVGKNLIMKRFSPRARGRATRVEKPFSEITIVVRELGEAA.

This sequence belongs to the universal ribosomal protein uL22 family. Part of the 50S ribosomal subunit.

Its function is as follows. This protein binds specifically to 23S rRNA; its binding is stimulated by other ribosomal proteins, e.g. L4, L17, and L20. It is important during the early stages of 50S assembly. It makes multiple contacts with different domains of the 23S rRNA in the assembled 50S subunit and ribosome. Functionally, the globular domain of the protein is located near the polypeptide exit tunnel on the outside of the subunit, while an extended beta-hairpin is found that lines the wall of the exit tunnel in the center of the 70S ribosome. This is Large ribosomal subunit protein uL22 from Caulobacter vibrioides (strain ATCC 19089 / CIP 103742 / CB 15) (Caulobacter crescentus).